We begin with the raw amino-acid sequence, 365 residues long: Cobalt-precorrin-5B C(1)-methyltransferase (365 aa).

The protein belongs to the CbiD family.

The enzyme catalyses Co-precorrin-5B + S-adenosyl-L-methionine = Co-precorrin-6A + S-adenosyl-L-homocysteine. It participates in cofactor biosynthesis; adenosylcobalamin biosynthesis; cob(II)yrinate a,c-diamide from sirohydrochlorin (anaerobic route): step 6/10. Its function is as follows. Catalyzes the methylation of C-1 in cobalt-precorrin-5B to form cobalt-precorrin-6A. This chain is Cobalt-precorrin-5B C(1)-methyltransferase, found in Methanococcus maripaludis (strain C6 / ATCC BAA-1332).